The primary structure comprises 200 residues: Phospholipase A2 inhibitor LNF1 (200 aa).

Positions 1–19 (MKYLHTICLLFIFVARGNS) are cleaved as a signal peptide. Disulfide bonds link Cys22-Cys46, Cys25-Cys32, Cys39-Cys67, Cys73-Cys94, Cys95-Cys100, Cys118-Cys143, Cys136-Cys165, and Cys169-Cys191. N-linked (GlcNAc...) asparagine glycosylation occurs at Asn176.

This sequence belongs to the CNF-like-inhibitor family. In terms of assembly, occurs as a mixture of oligomers. Tetrameric arrangement appears to be the predominant quaternary structure. As to expression, expressed by the liver.

It localises to the secreted. Inhibits the enzymatic activity of phospholipase A2 (PA2). This is Phospholipase A2 inhibitor LNF1 from Lachesis muta muta (Bushmaster).